We begin with the raw amino-acid sequence, 154 residues long: Endoribonuclease YbeY (154 aa).

3 residues coordinate Zn(2+): His118, His122, and His128.

This sequence belongs to the endoribonuclease YbeY family. Requires Zn(2+) as cofactor.

Its subcellular location is the cytoplasm. In terms of biological role, single strand-specific metallo-endoribonuclease involved in late-stage 70S ribosome quality control and in maturation of the 3' terminus of the 16S rRNA. This is Endoribonuclease YbeY from Chloroflexus aurantiacus (strain ATCC 29366 / DSM 635 / J-10-fl).